The chain runs to 527 residues: F-box-like/WD repeat-containing protein TBL1X (527 aa).

Residue S2 is modified to N-acetylserine. The LisH domain occupies 4 to 36 (TSDEVNFLVYRYLQESGFSHSAFTFGIESHISQ). The F-box-like domain maps to 41–86 (GTLVPPAALISILQKGLQYVEAEISINEDGTVFDGRPIESLSLIDA). K102 carries the post-translational modification N6-acetyllysine. The tract at residues 127–164 (TTPAAAAQQNPPKNGEATVNGEENGAHAINNHSKPMEI) is disordered. WD repeat units follow at residues 180–219 (GHES…NGGS), 236–275 (PSNK…ASTL), 277–316 (QHKG…AKQQ), 319–359 (FHSA…KTFQ), 360–399 (GHTN…CVHD), 402–450 (AHSK…CIHT), 453–492 (KHQE…LVHS), and 494–526 (RGTG…LDLR). K290 is covalently cross-linked (Glycyl lysine isopeptide (Lys-Gly) (interchain with G-Cter in SUMO2)).

This sequence belongs to the WD repeat EBI family. In terms of assembly, homotetramer; dimer of dimers. Component of the N-Cor repressor complex, at least composed of NCOR1, NCOR2, HDAC3, TBL1X, TBL1R, CORO2A and GPS2. Component of a E3 ubiquitin ligase complex containing UBE2D1, SIAH1, CACYBP/SIP, SKP1, APC and TBL1X. Interacts with GPS2 (when sumoylated); leading to protect GPS2 against degradation by the proteasome. Probably part of other corepressor complexes, that do not contain NCOR1 and NCOR2. Interacts with histones H2B, H3a and H4. Interacts with MECP2; recruits TBL1X to the heterochromatin foci. Interacts with USP44. Expressed in the cochlea.

The protein localises to the nucleus. Functionally, F-box-like protein involved in the recruitment of the ubiquitin/19S proteasome complex to nuclear receptor-regulated transcription units. Plays an essential role in transcription activation mediated by nuclear receptors. Probably acts as integral component of corepressor complexes that mediates the recruitment of the 19S proteasome complex, leading to the subsequent proteasomal degradation of transcription repressor complexes, thereby allowing cofactor exchange. This is F-box-like/WD repeat-containing protein TBL1X (Tbl1x) from Mus musculus (Mouse).